Here is a 357-residue protein sequence, read N- to C-terminus: Transcription factor unc-86 (357 aa).

The short motif at 35–44 (RAAQVALADI) is the POU-IV box element. A POU-specific domain is found at 155 to 232 (DMDTDPRQLE…ILHSWLEKAE (78 aa)). The homeobox DNA-binding region spans 253 to 312 (KKRKRTSIAAPEKRELEQFFKQQPRPSGERIASIADRLDLKKNVVRVWFCNQRQKQKRDF).

The protein belongs to the POU transcription factor family. Class-4 subfamily. As to quaternary structure, interacts with mec-3; the heterooligomer binds to the promoters of mec-3, mec-4 and mec-7. As to expression, specific to neurons and neuroblasts. Expressed in CEM head neurons and in IL2, URA, URB, URX and URY neurons. Not expressed in olfactory sensory neurons but expressed in AIZ interneurons.

It localises to the nucleus. In terms of biological role, transcription factor required for correct cell fate determination and differentiation in diverse neuronal cell lineages where it plays a role in specifying the fate of daughter cells during cell divisions. Involved in sensory neuron production and function. Binds both alone and with mec-3 to the mec-3 promoter to initiate and maintain mec-3 expression which is required for sensory neuron differentiation. In addition, binds both alone and with mec-3 to the promoters of mec-4 and mec-7 which act to regulate sensory neuron function. Involved in determining the identity of the serotonergic NSM neurons and the cholinergic IL2 sensory and URA motor neurons. Promotes expression of the cfi-1 transcription factor in the URA and IL2 neurons which in turn activates normal URA and IL2 gene expression. Required to determine the identity of BDU sensory neurons in concert with transcription factor unc-86, regulating expression of a number of genes, including transcription factors ceh-14 and ahr-1, neuropeptides flp-10, nlp-1 and nlp-15, and tyramine receptor-encoding ser-2. Regulates expression of a number of genes in NSM neurons including bas-1, cat-1, dop-3, mgl-3, nlp-13, scd-2 and ptps-1. In the IL2 neurons, required for expression of cho-1, gcy-19, klp-6, lag-2, unc-5 and unc-17. Promotes expression of pkd-2 in the male-specific CEM head neurons. Required for dauer-specific branching of IL2Q neurons and nictation behavior. Controls both the timing and direction of axon outgrowth in HSN neurons. Plays a role in serotonin production by regulating expression of the tryptophan hydrolase tph-1 which catalyzes serotonin synthesis, in the AIM, NSM, HSN and RIH neurons. Involved in regulation of lin-11 expression in the AIZ interneurons, the major interneurons of the olfactory pathway, and is required for odortaxis behavior. Involved in neurite pruning between AIM neurons during larval development by regulating the expression of transcription factor mbr-1. Required for correct localization of unc-40. This Caenorhabditis elegans protein is Transcription factor unc-86 (unc-86).